The sequence spans 229 residues: Cytidylate kinase (229 aa).

12–20 (GPSGSGKGT) is a binding site for ATP.

It belongs to the cytidylate kinase family. Type 1 subfamily.

It localises to the cytoplasm. It carries out the reaction CMP + ATP = CDP + ADP. The enzyme catalyses dCMP + ATP = dCDP + ADP. This Azotobacter vinelandii (strain DJ / ATCC BAA-1303) protein is Cytidylate kinase.